A 675-amino-acid polypeptide reads, in one-letter code: Putative acyl-coenzyme A oxidase 3.2, peroxisomal (675 aa).

Residues 1–34 (MSENVELRRAHILANHILRSPRPSSNPSLTPEVC) constitute a peroxisome transit peptide. 442–457 (AVGGQGLKTENRVGHL) is an FAD binding site.

It belongs to the acyl-CoA oxidase family. Requires FAD as cofactor.

The protein localises to the peroxisome. The enzyme catalyses a 2,3-saturated acyl-CoA + O2 = a (2E)-enoyl-CoA + H2O2. Functionally, catalyzes the desaturation of acyl-CoAs to 2-trans-enoyl-CoAs. This Arabidopsis thaliana (Mouse-ear cress) protein is Putative acyl-coenzyme A oxidase 3.2, peroxisomal (ACX3.2).